The sequence spans 253 residues: Sulfate transporter CysZ (253 aa).

Transmembrane regions (helical) follow at residues Phe-31 to Phe-51, Leu-75 to Ile-95, Ile-151 to Trp-171, and Ile-222 to Val-242.

Belongs to the CysZ family.

It localises to the cell inner membrane. Its function is as follows. High affinity, high specificity proton-dependent sulfate transporter, which mediates sulfate uptake. Provides the sulfur source for the cysteine synthesis pathway. The polypeptide is Sulfate transporter CysZ (Escherichia coli O81 (strain ED1a)).